A 450-amino-acid polypeptide reads, in one-letter code: Ornithine decarboxylase (450 aa).

Lys-59 carries the N6-(pyridoxal phosphate)lysine modification. Residues Ser-190, Gly-227, and 264 to 267 each bind pyridoxal 5'-phosphate; that span reads EPGR. Residue Ser-293 is modified to Phosphoserine; by CK2. Residue 321 to 322 participates in substrate binding; sequence YD. Cys-350 functions as the Proton donor; shared with dimeric partner in the catalytic mechanism. A substrate-binding site is contributed by Asp-351. Position 379 (Tyr-379) interacts with pyridoxal 5'-phosphate.

It belongs to the Orn/Lys/Arg decarboxylase class-II family. In terms of assembly, homodimer. Only the dimer is catalytically active, as the active sites are constructed of residues from both monomers. Requires pyridoxal 5'-phosphate as cofactor.

It carries out the reaction L-ornithine + H(+) = putrescine + CO2. It participates in amine and polyamine biosynthesis; putrescine biosynthesis via L-ornithine pathway; putrescine from L-ornithine: step 1/1. With respect to regulation, inhibited by antizymes (AZs) in response to polyamine levels. AZs inhibit the assembly of the functional homodimer by binding to ODC monomers and targeting them for ubiquitin-independent proteolytic destruction by the 26S proteasome. Catalyzes the first and rate-limiting step of polyamine biosynthesis that converts ornithine into putrescine, which is the precursor for the polyamines, spermidine and spermine. Polyamines are essential for cell proliferation and are implicated in cellular processes, ranging from DNA replication to apoptosis. The protein is Ornithine decarboxylase (ODC1) of Gallus gallus (Chicken).